A 355-amino-acid polypeptide reads, in one-letter code: Cobalt-precorrin-5B C(1)-methyltransferase (355 aa).

This sequence belongs to the CbiD family.

The enzyme catalyses Co-precorrin-5B + S-adenosyl-L-methionine = Co-precorrin-6A + S-adenosyl-L-homocysteine. It participates in cofactor biosynthesis; adenosylcobalamin biosynthesis; cob(II)yrinate a,c-diamide from sirohydrochlorin (anaerobic route): step 6/10. Its function is as follows. Catalyzes the methylation of C-1 in cobalt-precorrin-5B to form cobalt-precorrin-6A. The chain is Cobalt-precorrin-5B C(1)-methyltransferase from Parasynechococcus marenigrum (strain WH8102).